Here is a 387-residue protein sequence, read N- to C-terminus: Gamma-butyrobetaine dioxygenase (387 aa).

The Zn(2+) site is built by Cys-38, Cys-40, Cys-43, and His-82. Residues His-202, Asp-204, and His-347 each coordinate Fe cation. Residue Ser-351 is modified to Phosphoserine.

This sequence belongs to the gamma-BBH/TMLD family. Fe(2+) is required as a cofactor. It depends on L-ascorbate as a cofactor.

It localises to the cytoplasm. The enzyme catalyses 4-(trimethylamino)butanoate + 2-oxoglutarate + O2 = carnitine + succinate + CO2. Its pathway is amine and polyamine biosynthesis; carnitine biosynthesis. Functionally, catalyzes the formation of L-carnitine from gamma-butyrobetaine. In Mus musculus (Mouse), this protein is Gamma-butyrobetaine dioxygenase (Bbox1).